The sequence spans 460 residues: Elongation factor 1-alpha (460 aa).

The residue at position 2 (Gly2) is a N,N,N-trimethylglycine. Lys3 carries the post-translational modification N6,N6-dimethyllysine; alternate. Lys3 carries the post-translational modification N6-methyllysine; alternate. In terms of domain architecture, tr-type G spans 6 to 241; the sequence is KTHINVVVIG…DSIEPPKRPT (236 aa). The tract at residues 15 to 22 is G1; that stretch reads GHVDSGKS. Residue 15–22 coordinates GTP; sequence GHVDSGKS. Lys31 carries the post-translational modification N6-methyllysine. A G2 region spans residues 71–75; the sequence is GITID. At Lys80 the chain carries N6,N6,N6-trimethyllysine. Residues 92–95 form a G3 region; that stretch reads DAPG. GTP contacts are provided by residues 92-96 and 154-157; these read DAPGH and NKMD. Residues 154–157 form a G4 region; that stretch reads NKMD. The G5 stretch occupies residues 193–195; the sequence is SGF. Lys317 is modified (N6,N6-dimethyllysine; alternate). Lys317 bears the N6-methyllysine; alternate mark. Position 391 is an N6-methyllysine (Lys391).

This sequence belongs to the TRAFAC class translation factor GTPase superfamily. Classic translation factor GTPase family. EF-Tu/EF-1A subfamily.

The protein resides in the cytoplasm. Functionally, this protein promotes the GTP-dependent binding of aminoacyl-tRNA to the A-site of ribosomes during protein biosynthesis. This is Elongation factor 1-alpha (TEF) from Podospora anserina (Pleurage anserina).